Consider the following 516-residue polypeptide: BAR/IMD domain-containing adapter protein 2-like 2 (516 aa).

The IMD domain occupies 1-227 (MSGVNSDLLH…PTPLDQEAQL (227 aa)). Residues 200-273 (ADGWKEKVSE…SSSVGESLGL (74 aa)) are disordered. Residues 201–212 (DGWKEKVSESRS) are compositionally biased toward basic and acidic residues. Polar residues predominate over residues 226-236 (QLKSSVGSLLQ). Residues 238–247 (GDREMDREPL) show a composition bias toward basic and acidic residues. Over residues 249–270 (RVPSRAPSPLPSRSRSSSVGES) the composition is skewed to low complexity. An SH3 domain is found at 274–337 (GGGRSMRAIV…PAAYVASTED (64 aa)). Positions 355–376 (LLEPTSQSESDTQTYSEVSSPV) are enriched in polar residues. The interval 355 to 516 (LLEPTSQSES…TNDRSAPRIQ (162 aa)) is disordered. A compositionally biased stretch (basic and acidic residues) spans 434 to 450 (PDRRAESHFESKVELKN). Residues 454-465 (LPPPAPPLPNSP) are compositionally biased toward pro residues.

The protein localises to the cell membrane. In terms of biological role, phosphoinositides-binding protein that induces the formation of planar or gently curved membrane structures. The protein is BAR/IMD domain-containing adapter protein 2-like 2 (baiap2l2) of Danio rerio (Zebrafish).